Here is a 265-residue protein sequence, read N- to C-terminus: MEEKKEEGEAEIQEHGPEHWFSKWERQCLAEAEQEEPAEEETDQSQQKLWHLFQNSATAVAQLYKDRVCQQQQGLSLWVPFQNAATAVTNLYKESVDAHQRSYELGIQIGHQRRNKDVLAWVKKRRRTIRREDLISFLCGKAPPPRSSRAPPRLAMVSPSRSTPSETSSSVETDLQPFREAIALHGLSGAMASISMRSGAPGSPTHLSASSAPSRRRNGLHDVDLNTFIAEEMALHLDNGTRKRSSAQCNDVITDSPTHKRNRMI.

Disordered regions lie at residues 1-22 (MEEKKEEGEAEIQEHGPEHWFS), 140-173 (GKAPPPRSSRAPPRLAMVSPSRSTPSETSSSVET), and 194-219 (ISMRSGAPGSPTHLSASSAPSRRRNG). Low complexity predominate over residues 147-172 (SSRAPPRLAMVSPSRSTPSETSSSVE).

This sequence belongs to the HAPSTR1 family. As to quaternary structure, oligomer.

It is found in the nucleus. Its subcellular location is the cytoplasm. Its function is as follows. Acts as a central player within a network of stress response pathways promoting cellular adaptability. Functions as a negative regulator of TP53/P53 in the cellular response to telomere erosion and probably also DNA damage. The protein is HUWE1-associated protein modifying stress responses of Danio rerio (Zebrafish).